The primary structure comprises 441 residues: MPQPSLSSLYSDHLRTLTARADEALQRGGFEHLVVPSGSTHYQLFDDRDYPYAVNPQFKAWVPLTRVPNSWLVYTPGKRPTVIFYQPFDYWHVVPDAPSGWWVDHCDIHIIRTPEQALALLPKHAERCAILGEPQSTLGAYVPNNPQPVLDYLEYQRAFKTPYELALLRIAQQLAVRGHRAAEAAFRAGQSEFGIHMAYCAAVGQDANDLPYGNIIALNEHGAVLHYTELGQQPPQPLRSFLIDAGASAYGYASDITRTYAADPGSDFQALIDAVDAAQLRMGQNVRAGVDYKQLHIEAHLALMGILKEFGVLTVSPEAALATGVSAAFFPHGLGHLIGLQVHDVAGFAASDRGGRIERPAGHPYLRLTRVLEPGMVVTIEPGVYFIDMLLDEVKKNGHAASVNWQRVEAFKPYGGIRIEDEVVCTDGSAENLTRPVFASA.

Positions 244, 255, 336, 381, and 420 each coordinate Mn(2+).

This sequence belongs to the peptidase M24B family. Bacterial-type prolidase subfamily. The cofactor is Mn(2+).

The catalysed reaction is Xaa-L-Pro dipeptide + H2O = an L-alpha-amino acid + L-proline. Splits dipeptides with a prolyl residue in the C-terminal position. In Xanthomonas euvesicatoria pv. vesicatoria (strain 85-10) (Xanthomonas campestris pv. vesicatoria), this protein is Xaa-Pro dipeptidase.